Reading from the N-terminus, the 689-residue chain is Glycine--tRNA ligase beta subunit (689 aa).

The protein belongs to the class-II aminoacyl-tRNA synthetase family. Tetramer of two alpha and two beta subunits.

Its subcellular location is the cytoplasm. It carries out the reaction tRNA(Gly) + glycine + ATP = glycyl-tRNA(Gly) + AMP + diphosphate. This chain is Glycine--tRNA ligase beta subunit, found in Glaesserella parasuis serovar 5 (strain SH0165) (Haemophilus parasuis).